We begin with the raw amino-acid sequence, 96 residues long: Integration host factor subunit beta (96 aa).

Positions 59–78 are disordered; that stretch reads RVGRNPKTGETVSLPGKYVP.

It belongs to the bacterial histone-like protein family. Heterodimer of an alpha and a beta chain.

Its function is as follows. This protein is one of the two subunits of integration host factor, a specific DNA-binding protein that functions in genetic recombination as well as in transcriptional and translational control. The chain is Integration host factor subunit beta from Thioalkalivibrio sulfidiphilus (strain HL-EbGR7).